Reading from the N-terminus, the 80-residue chain is uncharacterized protein (80 aa).

This is an uncharacterized protein from Bacillus subtilis (strain 168).